Here is a 236-residue protein sequence, read N- to C-terminus: Peroxisomal membrane protein 11D (236 aa).

The residue at position 2 (glycine 2) is an N-acetylglycine. The Cytoplasmic portion of the chain corresponds to 2–92 (GTTLDVSRAE…LPLVLLGKSK (91 aa)). A helical transmembrane segment spans residues 93–109 (NALLSTFLFLDQIVWLG). Residues 110–207 (RSGIYKNKER…LLQLAPTKIT (98 aa)) lie on the Lumenal side of the membrane. A helical transmembrane segment spans residues 208–227 (PRVTGAFGFITSIISCYQLL). Residues 228-236 (PTRPKIKTP) lie on the Cytoplasmic side of the membrane.

It belongs to the peroxin-11 family. In terms of assembly, homooligomer. Interacts with ARC5 and FIS1B on peroxisomes. In terms of tissue distribution, expressed in developing siliques.

The protein localises to the peroxisome membrane. Functionally, involved in peroxisomal proliferation. Promotes peroxisomal duplication, aggregation or elongation without fission. In Arabidopsis thaliana (Mouse-ear cress), this protein is Peroxisomal membrane protein 11D (PEX11D).